The chain runs to 382 residues: Protein-arginine rhamnosyltransferase (382 aa).

Residues 17 to 20 (NFGD), Tyr-187, Gln-252, and 268 to 272 (RGEDS) each bind dTDP-beta-L-rhamnose. Asp-20 acts as the Proton acceptor in catalysis. The active site involves Glu-270.

It belongs to the glycosyltransferase 104 family.

It carries out the reaction dTDP-beta-L-rhamnose + L-arginyl-[protein] = N(omega)-(alpha-L-rhamnosyl)-L-arginyl-[protein] + dTDP + H(+). Protein-arginine rhamnosyltransferase that catalyzes the transfer of a single rhamnose to elongation factor P (EF-P) on 'Lys-32', a modification required for EF-P-dependent rescue of polyproline stalled ribosomes. The sequence is that of Protein-arginine rhamnosyltransferase from Neisseria meningitidis.